The primary structure comprises 460 residues: NADH-ubiquinone oxidoreductase chain 4 (460 aa).

The next 12 membrane-spanning stretches (helical) occupy residues 20 to 42 (PKWL…LTWL), 61 to 81 (PLST…VLAS), 93 to 113 (QRLY…AFGA), 114 to 134 (TEII…LIII), 148 to 168 (TYFL…LLLL), 195 to 215 (IWWA…GVHL), 225 to 245 (PVAG…YGMM), 258 to 278 (LAYP…SICL), 285 to 304 (SLIA…GILI), 309 to 331 (GFTG…FCLA), 351 to 371 (MIFP…LALP), and 394 to 414 (IILT…LFLM).

This sequence belongs to the complex I subunit 4 family.

It is found in the mitochondrion membrane. The enzyme catalyses a ubiquinone + NADH + 5 H(+)(in) = a ubiquinol + NAD(+) + 4 H(+)(out). Core subunit of the mitochondrial membrane respiratory chain NADH dehydrogenase (Complex I) that is believed to belong to the minimal assembly required for catalysis. Complex I functions in the transfer of electrons from NADH to the respiratory chain. The immediate electron acceptor for the enzyme is believed to be ubiquinone. The sequence is that of NADH-ubiquinone oxidoreductase chain 4 (MT-ND4) from Formosania lacustris (Oriental stream loach).